Here is a 442-residue protein sequence, read N- to C-terminus: Thymidine phosphorylase (442 aa).

It belongs to the thymidine/pyrimidine-nucleoside phosphorylase family. Homodimer.

The catalysed reaction is thymidine + phosphate = 2-deoxy-alpha-D-ribose 1-phosphate + thymine. The protein operates within pyrimidine metabolism; dTMP biosynthesis via salvage pathway; dTMP from thymine: step 1/2. Functionally, the enzymes which catalyze the reversible phosphorolysis of pyrimidine nucleosides are involved in the degradation of these compounds and in their utilization as carbon and energy sources, or in the rescue of pyrimidine bases for nucleotide synthesis. In Vibrio parahaemolyticus serotype O3:K6 (strain RIMD 2210633), this protein is Thymidine phosphorylase.